We begin with the raw amino-acid sequence, 493 residues long: Glutamyl-tRNA(Gln) amidotransferase subunit A (493 aa).

Catalysis depends on charge relay system residues lysine 79 and serine 159. The active-site Acyl-ester intermediate is serine 183.

This sequence belongs to the amidase family. GatA subfamily. In terms of assembly, heterotrimer of A, B and C subunits.

The catalysed reaction is L-glutamyl-tRNA(Gln) + L-glutamine + ATP + H2O = L-glutaminyl-tRNA(Gln) + L-glutamate + ADP + phosphate + H(+). Its function is as follows. Allows the formation of correctly charged Gln-tRNA(Gln) through the transamidation of misacylated Glu-tRNA(Gln) in organisms which lack glutaminyl-tRNA synthetase. The reaction takes place in the presence of glutamine and ATP through an activated gamma-phospho-Glu-tRNA(Gln). This is Glutamyl-tRNA(Gln) amidotransferase subunit A from Agrobacterium fabrum (strain C58 / ATCC 33970) (Agrobacterium tumefaciens (strain C58)).